The sequence spans 2454 residues: Probable serine/threonine-protein kinase DDB_G0277071 (2454 aa).

Residues 31-51 (TSSLTTTTTTTTTTTTTTSTT) show a composition bias toward low complexity. 6 disordered regions span residues 31–57 (TSSLTTTTTTTTTTTTTTSTTHNHESN), 206–265 (QQQL…QKQN), 340–612 (PRPP…LKIE), 963–1051 (NNIN…NENE), 1201–1330 (SSDD…SNPL), and 1342–1528 (ISKG…SNNT). A coiled-coil region spans residues 259–307 (KQQQKQNSQQQQQQQQQQQQQQQQQQQQQQQQQQQQQQQQQQQKLNIHE). Low complexity-rich tracts occupy residues 346-399 (QQHQ…NITP) and 406-428 (PSSVTSPISTSTNPPSNNPKPTS). Over residues 429 to 444 (IGQIQSLHYHNPSLYQ) the composition is skewed to polar residues. 2 stretches are compositionally biased toward low complexity: residues 450–461 (NRNRGNNNNNNN) and 475–536 (SSTV…NTPN). The segment covering 553–568 (GGIGGGGGGGSGGGGI) has biased composition (gly residues). Low complexity-rich tracts occupy residues 963-1048 (NNIN…TTTN), 1201-1248 (SSDD…TGGP), 1275-1284 (NSSNNNNTSS), 1299-1324 (SGSSTSSPSTLISTPSTLASTPPTTG), and 1346-1403 (SPAS…SVST). Over residues 1417-1441 (LNLSSVSKTGQASTSTPNLLNLKNI) the composition is skewed to polar residues. Over residues 1442–1478 (PTTTNNSNSTTTTTTTTPTGKPQFSLNLSSLSKSSSS) the composition is skewed to low complexity. Residues 1479–1491 (TETVPPSQPNQPI) are compositionally biased toward polar residues. Residues 1509–1528 (STTTTTTTTTPPPINNSNNT) show a composition bias toward low complexity. In terms of domain architecture, Protein kinase spans 1730–2034 (FKDLKRVAKG…TKFIAIKPTI (305 aa)). ATP contacts are provided by residues 1736–1744 (VAKGAYGTV) and lysine 1760. The active-site Proton acceptor is the aspartate 1858. Residues 2130–2271 (RPSKVASFMY…LCRWGKQRRN (142 aa)) enclose the Tyrosine-protein phosphatase domain. The tract at residues 2379-2404 (NINNNNNNNSNNSKSKQQQQQQQNQN) is disordered.

Belongs to the protein kinase superfamily. Ser/Thr protein kinase family.

It catalyses the reaction L-seryl-[protein] + ATP = O-phospho-L-seryl-[protein] + ADP + H(+). It carries out the reaction L-threonyl-[protein] + ATP = O-phospho-L-threonyl-[protein] + ADP + H(+). This chain is Probable serine/threonine-protein kinase DDB_G0277071, found in Dictyostelium discoideum (Social amoeba).